The following is a 450-amino-acid chain: tRNA-2-methylthio-N(6)-dimethylallyladenosine synthase (450 aa).

The MTTase N-terminal domain maps to 2 to 119; the sequence is KKVFVKTYGC…LPDLIARRQR (118 aa). Positions 11, 48, 82, 156, 160, and 163 each coordinate [4Fe-4S] cluster. The Radical SAM core domain maps to 142–375; sequence RVEGPSAFVS…QATIEENVQR (234 aa). Residues 378-448 enclose the TRAM domain; that stretch reads QGMVGTVQRI…PHSLRGEIVV (71 aa).

This sequence belongs to the methylthiotransferase family. MiaB subfamily. As to quaternary structure, monomer. The cofactor is [4Fe-4S] cluster.

The protein localises to the cytoplasm. The enzyme catalyses N(6)-dimethylallyladenosine(37) in tRNA + (sulfur carrier)-SH + AH2 + 2 S-adenosyl-L-methionine = 2-methylsulfanyl-N(6)-dimethylallyladenosine(37) in tRNA + (sulfur carrier)-H + 5'-deoxyadenosine + L-methionine + A + S-adenosyl-L-homocysteine + 2 H(+). In terms of biological role, catalyzes the methylthiolation of N6-(dimethylallyl)adenosine (i(6)A), leading to the formation of 2-methylthio-N6-(dimethylallyl)adenosine (ms(2)i(6)A) at position 37 in tRNAs that read codons beginning with uridine. In Cupriavidus taiwanensis (strain DSM 17343 / BCRC 17206 / CCUG 44338 / CIP 107171 / LMG 19424 / R1) (Ralstonia taiwanensis (strain LMG 19424)), this protein is tRNA-2-methylthio-N(6)-dimethylallyladenosine synthase.